Reading from the N-terminus, the 256-residue chain is Transcription factor BHLH094 (256 aa).

Residues 1 to 125 are disordered; sequence MDPAPSLAAE…TPPEPPKQDY (125 aa). Residues 79 to 97 are compositionally biased toward basic and acidic residues; it reads PEAKRLKPMKSSDKNDSLR. Positions 134 to 147 are basic motif; degenerate; that stretch reads QATDSHSLAERARR. In terms of domain architecture, bHLH spans 134–184; the sequence is QATDSHSLAERARREKISERMKILQDLVPGCNKVIGKASVLDEIINYIQSL. Residues 148–184 form a helix-loop-helix motif region; that stretch reads EKISERMKILQDLVPGCNKVIGKASVLDEIINYIQSL.

The protein belongs to the bHLH protein family. In terms of assembly, interacts with RSS3. Forms a ternary complex with RSS3 and TIFY11A/JAZ9 in the nucleus.

The protein resides in the nucleus. Functionally, transcription factor that forms a ternary complex with RSS3 and TIFY11A/JAZ9 to negatively regulate jasmonate-responsive genes. The polypeptide is Transcription factor BHLH094 (Oryza sativa subsp. japonica (Rice)).